The primary structure comprises 101 residues: MAKQSMKAREVKRAKLVVKFAEQRATLKTTINDVNATDEDRWSAMLKLQTLPRDSSPVRKRNRCSVTGRPHGFLRKFGMSRIKVREHMMRGEIPGLKKASW.

The protein belongs to the universal ribosomal protein uS14 family. As to quaternary structure, part of the 30S ribosomal subunit. Contacts proteins S3 and S10.

In terms of biological role, binds 16S rRNA, required for the assembly of 30S particles and may also be responsible for determining the conformation of the 16S rRNA at the A site. In Psychromonas ingrahamii (strain DSM 17664 / CCUG 51855 / 37), this protein is Small ribosomal subunit protein uS14.